The following is a 133-amino-acid chain: UPF0768 protein C977.18 (133 aa).

Belongs to the UPF0768 family.

This Schizosaccharomyces pombe (strain 972 / ATCC 24843) (Fission yeast) protein is UPF0768 protein C977.18.